The sequence spans 158 residues: Transcriptional repressor NrdR (158 aa).

A zinc finger spans residues 3–34; it reads CPYCQSEDTQVKDSRPAEDGAVIRRRRVCSVC. An ATP-cone domain is found at 49-139; that stretch reads LMVVKKSGRR…VYRNFSKAVD (91 aa).

This sequence belongs to the NrdR family. It depends on Zn(2+) as a cofactor.

In terms of biological role, negatively regulates transcription of bacterial ribonucleotide reductase nrd genes and operons by binding to NrdR-boxes. In Brucella abortus (strain S19), this protein is Transcriptional repressor NrdR.